The chain runs to 583 residues: CTP synthase (583 aa).

The tract at residues 1 to 278 (MRRHPQTATK…DAFVVRRLNL (278 aa)) is amidoligase domain. Ser-20 provides a ligand contact to CTP. Ser-20 is a UTP binding site. Residues 21–26 (SLGKGL) and Asp-78 each bind ATP. 2 residues coordinate Mg(2+): Asp-78 and Glu-152. Residues 159–161 (DIE), 199–204 (KTKPTQ), and Lys-235 each bind CTP. UTP-binding positions include 199–204 (KTKPTQ) and Lys-235. A Glutamine amidotransferase type-1 domain is found at 303-551 (RIALVGKYVE…VKAAIDYKEG (249 aa)). Gly-366 contacts L-glutamine. The active-site Nucleophile; for glutamine hydrolysis is the Cys-393. Residues 394–397 (LGLQ), Glu-416, and Arg-477 each bind L-glutamine. Active-site residues include His-524 and Glu-526. The segment at 559 to 583 (PERVSNGAERRDQVGQSIPEPANRG) is disordered.

It belongs to the CTP synthase family. In terms of assembly, homotetramer.

It catalyses the reaction UTP + L-glutamine + ATP + H2O = CTP + L-glutamate + ADP + phosphate + 2 H(+). It carries out the reaction L-glutamine + H2O = L-glutamate + NH4(+). The catalysed reaction is UTP + NH4(+) + ATP = CTP + ADP + phosphate + 2 H(+). The protein operates within pyrimidine metabolism; CTP biosynthesis via de novo pathway; CTP from UDP: step 2/2. Allosterically activated by GTP, when glutamine is the substrate; GTP has no effect on the reaction when ammonia is the substrate. The allosteric effector GTP functions by stabilizing the protein conformation that binds the tetrahedral intermediate(s) formed during glutamine hydrolysis. Inhibited by the product CTP, via allosteric rather than competitive inhibition. Its function is as follows. Catalyzes the ATP-dependent amination of UTP to CTP with either L-glutamine or ammonia as the source of nitrogen. Regulates intracellular CTP levels through interactions with the four ribonucleotide triphosphates. The chain is CTP synthase from Mycobacterium ulcerans (strain Agy99).